The chain runs to 107 residues: UPF0122 protein MYPE4850 (107 aa).

This sequence belongs to the UPF0122 family.

Functionally, might take part in the signal recognition particle (SRP) pathway. This is inferred from the conservation of its genetic proximity to ftsY/ffh. May be a regulatory protein. This Malacoplasma penetrans (strain HF-2) (Mycoplasma penetrans) protein is UPF0122 protein MYPE4850.